Consider the following 129-residue polypeptide: Small ribosomal subunit protein uS11 (129 aa).

The protein belongs to the universal ribosomal protein uS11 family. Part of the 30S ribosomal subunit. Interacts with proteins S7 and S18. Binds to IF-3.

In terms of biological role, located on the platform of the 30S subunit, it bridges several disparate RNA helices of the 16S rRNA. Forms part of the Shine-Dalgarno cleft in the 70S ribosome. This chain is Small ribosomal subunit protein uS11, found in Caulobacter sp. (strain K31).